The chain runs to 581 residues: ATP-dependent lipid A-core flippase (581 aa).

Helical transmembrane passes span 21 to 41 (TVAI…ALFI), 65 to 85 (FVVI…SYCL), 138 to 158 (ALLI…VMFY), 161 to 181 (WQLS…VTVV), 246 to 266 (LSVS…LWVV), and 271 to 291 (MIDT…MMLL). Residues 24–306 (IVAIIGMIGY…LANVNSDMQR (283 aa)) form the ABC transmembrane type-1 domain. An ABC transporter domain is found at 338-575 (IEVKNVTFKY…NGTYSALCKM (238 aa)). 372-379 (GRSGSGKS) provides a ligand contact to ATP.

This sequence belongs to the ABC transporter superfamily. Lipid exporter (TC 3.A.1.106) family. In terms of assembly, homodimer.

It localises to the cell inner membrane. The enzyme catalyses ATP + H2O + lipid A-core oligosaccharideSide 1 = ADP + phosphate + lipid A-core oligosaccharideSide 2.. Involved in lipopolysaccharide (LPS) biosynthesis. Translocates lipid A-core from the inner to the outer leaflet of the inner membrane. Transmembrane domains (TMD) form a pore in the inner membrane and the ATP-binding domain (NBD) is responsible for energy generation. The chain is ATP-dependent lipid A-core flippase from Pseudoalteromonas translucida (strain TAC 125).